The chain runs to 515 residues: Maturase K (515 aa).

It belongs to the intron maturase 2 family. MatK subfamily.

The protein localises to the plastid. The protein resides in the chloroplast. Its function is as follows. Usually encoded in the trnK tRNA gene intron. Probably assists in splicing its own and other chloroplast group II introns. The sequence is that of Maturase K from Pinus uncinata (Mountain pine).